A 216-amino-acid chain; its full sequence is Ribosomal RNA small subunit methyltransferase G (216 aa).

S-adenosyl-L-methionine contacts are provided by residues G73, L78, 124–125 (AE), and R139.

The protein belongs to the methyltransferase superfamily. RNA methyltransferase RsmG family.

The protein resides in the cytoplasm. In terms of biological role, specifically methylates the N7 position of guanine in position 518 of 16S rRNA. This chain is Ribosomal RNA small subunit methyltransferase G, found in Pseudarthrobacter chlorophenolicus (strain ATCC 700700 / DSM 12829 / CIP 107037 / JCM 12360 / KCTC 9906 / NCIMB 13794 / A6) (Arthrobacter chlorophenolicus).